Consider the following 172-residue polypeptide: Translationally-controlled tumor protein (172 aa).

A TCTP domain is found at 1–172 (MIIYRDLISH…FKDGLEMEKC (172 aa)). S46 carries the post-translational modification Phosphoserine; by PLK1. S53 carries the phosphoserine modification. At S64 the chain carries Phosphoserine; by PLK1. Residues 70 to 172 (VDIVMNHHLQ…FKDGLEMEKC (103 aa)) are required for reduction of TSC22D1 protein stability.

This sequence belongs to the TCTP family. In terms of assembly, homodimer. Interacts with STEAP3. Interacts with TSC22D1; interaction results in the destabilization of TSC22D1 protein.

Its subcellular location is the cytoplasm. Involved in calcium binding and microtubule stabilization. Acts as a negative regulator of TSC22D1-mediated apoptosis, via interaction with and destabilization of TSC22D1 protein. In Bos taurus (Bovine), this protein is Translationally-controlled tumor protein (TPT1).